We begin with the raw amino-acid sequence, 558 residues long: MSAKYIFVTGGVVSSLGKGLAAASIGCLLEMRGLKVNMQKFDPYLNVDPGTMSPFQHGEVFVTDDGAETDLDLGHYERYTHSKLTRENNWTTGRIYEQIITKERRGDYLGKTVQVIPHVTNEIKAAMKRAAVDVDVAIVEIGGTVGDIESLPFIEAIRQMRQELGRDNTLFVHLTLVPYIAAAGELKTKPTQHSVKELLSIGIQPDILLCRTDRFLSKDIKGKIALFCNVEDEAVITAKDVASIYEVPLGFHHEGVDRLVMKYLRLDAKEPDLTRWQDIVHRVYNPKDEVIIGIIGKYVEYEDSYKSLKEALVHGSLAHNLKLNVTWIEAEGLETKDESYYEQLRHVDGILVPGGFGKRGIAGMLNGIRFAREHKVPYFGICLGMQTASIEFARNVCGLEDANSSEFDPATPHRVIYKLRELRGVEELGGTMRLGAWACKLEPGSHAAKAYGTTEISERHRHRYEFNQEYREQMAAAGLKFTGTTPDGTYIEIVELDQNEHPYFLGCQFHPEFKSKPLEPHPLFKAFIGASYEHRMKRTHTKEREEESVFLRPERVGK.

The amidoligase domain stretch occupies residues 1-266; it reads MSAKYIFVTG…DRLVMKYLRL (266 aa). Position 14 (serine 14) interacts with CTP. Serine 14 serves as a coordination point for UTP. ATP is bound by residues 15 to 20 and aspartate 72; that span reads SLGKGL. Positions 72 and 140 each coordinate Mg(2+). CTP is bound by residues 147 to 149, 187 to 192, and lysine 223; these read DIE and KTKPTQ. UTP is bound by residues 187–192 and lysine 223; that span reads KTKPTQ. 239–241 serves as a coordination point for ATP; it reads KDV. Positions 291–537 constitute a Glutamine amidotransferase type-1 domain; sequence IIGIIGKYVE…IGASYEHRMK (247 aa). Residue glycine 355 coordinates L-glutamine. Cysteine 382 functions as the Nucleophile; for glutamine hydrolysis in the catalytic mechanism. L-glutamine contacts are provided by residues 383 to 386, glutamate 406, and arginine 463; that span reads LGMQ. Active-site residues include histidine 510 and glutamate 512. The disordered stretch occupies residues 539–558; it reads THTKEREEESVFLRPERVGK. Residues 542–558 are compositionally biased toward basic and acidic residues; it reads KEREEESVFLRPERVGK.

It belongs to the CTP synthase family. Homotetramer.

The enzyme catalyses UTP + L-glutamine + ATP + H2O = CTP + L-glutamate + ADP + phosphate + 2 H(+). The catalysed reaction is L-glutamine + H2O = L-glutamate + NH4(+). It catalyses the reaction UTP + NH4(+) + ATP = CTP + ADP + phosphate + 2 H(+). It participates in pyrimidine metabolism; CTP biosynthesis via de novo pathway; CTP from UDP: step 2/2. With respect to regulation, allosterically activated by GTP, when glutamine is the substrate; GTP has no effect on the reaction when ammonia is the substrate. The allosteric effector GTP functions by stabilizing the protein conformation that binds the tetrahedral intermediate(s) formed during glutamine hydrolysis. Inhibited by the product CTP, via allosteric rather than competitive inhibition. Its function is as follows. Catalyzes the ATP-dependent amination of UTP to CTP with either L-glutamine or ammonia as the source of nitrogen. Regulates intracellular CTP levels through interactions with the four ribonucleotide triphosphates. This Koribacter versatilis (strain Ellin345) protein is CTP synthase.